A 317-amino-acid chain; its full sequence is Acetyl-coenzyme A carboxylase carboxyl transferase subunit alpha (317 aa).

Residues 33–294 (NLDDEITRLQ…KKRLLADLAD (262 aa)) form the CoA carboxyltransferase C-terminal domain.

Belongs to the AccA family. Acetyl-CoA carboxylase is a heterohexamer composed of biotin carboxyl carrier protein (AccB), biotin carboxylase (AccC) and two subunits each of ACCase subunit alpha (AccA) and ACCase subunit beta (AccD).

The protein localises to the cytoplasm. It catalyses the reaction N(6)-carboxybiotinyl-L-lysyl-[protein] + acetyl-CoA = N(6)-biotinyl-L-lysyl-[protein] + malonyl-CoA. It participates in lipid metabolism; malonyl-CoA biosynthesis; malonyl-CoA from acetyl-CoA: step 1/1. Component of the acetyl coenzyme A carboxylase (ACC) complex. First, biotin carboxylase catalyzes the carboxylation of biotin on its carrier protein (BCCP) and then the CO(2) group is transferred by the carboxyltransferase to acetyl-CoA to form malonyl-CoA. The protein is Acetyl-coenzyme A carboxylase carboxyl transferase subunit alpha of Histophilus somni (strain 129Pt) (Haemophilus somnus).